The chain runs to 538 residues: MKAFSVTCLGFAVFSSSICVNINILQQIGYIKQQVRQLSYYSQSSSSYIVVKLLPNIQPTDNSCEFKSVTQYNKTLSNLLLPIAENINNIASPSPGSRRHKRFAGIAIGIAALGVATAAQVTAAVSLVQAQTNARAIAAMKNSIQATNRAIFEVKEGTQQLAIAVQAIQDHINTIMNTQLNNMSCQILDNQLATYLGLYLTELTTVFQPQLINPALSPISIQALRSLLGSMTPAVVQATLSTSISAAEILSAGLMEGQIVSVLLDEMQMIVKINIPTIVTQSNALVIDFYSISSFINNQESIIQLPDRILEIGNEQWSYPAKNCKLTRHHIFCQYNEAERLSLESKLCLAGNISACVFSPIAGSYMRRFVALDGTIVANCRSLTCLCKSPSYPIYQPDHHAVTTIDLTTCQTLSLDGLDFSIVSLSNITYAENLTISLSQTINTQPIDISTELSKVNASLQNAVKYIKESNHQLQSVSVNSKIGAIIVAALVLSILSIIISLLFCCWAYIATKEIRRINFKTNHINTISSSVDDLIRY.

Positions 1 to 19 are cleaved as a signal peptide; sequence MKAFSVTCLGFAVFSSSIC. The Extracellular portion of the chain corresponds to 20–486; sequence VNINILQQIG…VSVNSKIGAI (467 aa). N-linked (GlcNAc...) asparagine; by host glycans are attached at residues N56 and N73. Residues 103–127 are fusion peptide; the sequence is FAGIAIGIAALGVATAAQVTAAVSL. Residues 128 to 156 are a coiled coil; sequence VQAQTNARAIAAMKNSIQATNRAIFEVKE. N182 carries N-linked (GlcNAc...) asparagine; by host glycosylation. Disulfide bonds link C324–C333, C348–C356, C380–C385, and C387–C410. The N-linked (GlcNAc...) asparagine; by host glycan is linked to N352. N-linked (GlcNAc...) asparagine; by host glycosylation is found at N427, N433, and N457. The stretch at 452–477 forms a coiled coil; the sequence is ELSKVNASLQNAVKYIKESNHQLQSV. A helical membrane pass occupies residues 487 to 507; that stretch reads IVAALVLSILSIIISLLFCCW. Residues 508-538 lie on the Cytoplasmic side of the membrane; that stretch reads AYIATKEIRRINFKTNHINTISSSVDDLIRY.

This sequence belongs to the paramyxoviruses fusion glycoprotein family. Homotrimer; disulfide-linked F1-F2. Interacts with host LAMP1; LAMP2 and LAMP3; these interactions promote the cleavage of the viral fusion protein F. The inactive precursor F0 is glycosylated and proteolytically cleaved into F1 and F2 to be functionally active. The cleavage is mediated by cellular proteases including host FURIN during the transport and maturation of the polypeptide.

The protein localises to the virion membrane. It is found in the host cell membrane. Its function is as follows. Class I viral fusion protein. Under the current model, the protein has at least 3 conformational states: pre-fusion native state, pre-hairpin intermediate state, and post-fusion hairpin state. During viral and plasma cell membrane fusion, the heptad repeat (HR) regions assume a trimer-of-hairpins structure, positioning the fusion peptide in close proximity to the C-terminal region of the ectodomain. The formation of this structure appears to drive apposition and subsequent fusion of viral and plasma cell membranes. Directs fusion of viral and cellular membranes leading to delivery of the nucleocapsid into the cytoplasm. This fusion is pH independent and occurs directly at the outer cell membrane. The trimer of F1-F2 (F protein) probably interacts with HN at the virion surface. Upon HN binding to its cellular receptor, the hydrophobic fusion peptide is unmasked and interacts with the cellular membrane, inducing the fusion between cell and virion membranes. Later in infection, F proteins expressed at the plasma membrane of infected cells could mediate fusion with adjacent cells to form syncytia, a cytopathic effect that could lead to tissue necrosis. The chain is Fusion glycoprotein F0 (F) from Mumps virus (strain RW) (MuV).